Here is a 138-residue protein sequence, read N- to C-terminus: Flagellar assembly factor FliW (138 aa).

It belongs to the FliW family. Interacts with translational regulator CsrA and flagellin(s).

It localises to the cytoplasm. In terms of biological role, acts as an anti-CsrA protein, binds CsrA and prevents it from repressing translation of its target genes, one of which is flagellin. Binds to flagellin and participates in the assembly of the flagellum. The polypeptide is Flagellar assembly factor FliW (Symbiobacterium thermophilum (strain DSM 24528 / JCM 14929 / IAM 14863 / T)).